We begin with the raw amino-acid sequence, 161 residues long: Photosystem II extrinsic protein V (161 aa).

Residues 1–25 (MKKFFISVVFIVLLTFTTFINSATA) form the signal peptide. Residues cysteine 61, cysteine 64, histidine 65, and histidine 116 each coordinate heme c.

It belongs to the cytochrome c family. PsbV subfamily. As to quaternary structure, PSII is composed of 1 copy each of membrane proteins PsbA, PsbB, PsbC, PsbD, PsbE, PsbF, PsbH, PsbI, PsbJ, PsbK, PsbL, PsbM, PsbT, PsbX, PsbY, PsbZ, Psb30/Ycf12, peripheral proteins PsbO, CyanoQ (PsbQ), PsbU, PsbV and a large number of cofactors. It forms dimeric complexes. It depends on heme c as a cofactor.

It localises to the cellular thylakoid membrane. One of the extrinsic, lumenal subunits of photosystem II (PSII). PSII is a light-driven water plastoquinone oxidoreductase, using light energy to abstract electrons from H(2)O, generating a proton gradient subsequently used for ATP formation. The extrinsic proteins stabilize the structure of photosystem II oxygen-evolving complex (OEC), the ion environment of oxygen evolution and protect the OEC against heat-induced inactivation. Low-potential cytochrome c that plays a role in the OEC of PSII. This chain is Photosystem II extrinsic protein V, found in Trichodesmium erythraeum (strain IMS101).